A 137-amino-acid chain; its full sequence is Large ribosomal subunit protein uL16 (137 aa).

The protein belongs to the universal ribosomal protein uL16 family. Part of the 50S ribosomal subunit.

In terms of biological role, binds 23S rRNA and is also seen to make contacts with the A and possibly P site tRNAs. This Rhizobium johnstonii (strain DSM 114642 / LMG 32736 / 3841) (Rhizobium leguminosarum bv. viciae) protein is Large ribosomal subunit protein uL16.